The sequence spans 138 residues: UPF0047 protein YjbQ (138 aa).

Belongs to the UPF0047 family.

The polypeptide is UPF0047 protein YjbQ (yjbQ) (Escherichia coli O157:H7).